A 496-amino-acid polypeptide reads, in one-letter code: Cytochrome P450 71B12 (496 aa).

A helical transmembrane segment spans residues 2–22 (SLWYIIVAFVFFSSMIIVRII). Cysteine 436 contacts heme.

The protein belongs to the cytochrome P450 family. Requires heme as cofactor.

The protein resides in the membrane. The sequence is that of Cytochrome P450 71B12 (CYP71B12) from Arabidopsis thaliana (Mouse-ear cress).